The primary structure comprises 401 residues: Argininosuccinate synthase (401 aa).

8–16 lines the ATP pocket; it reads AYSGGLDTS. Tyr87 contacts L-citrulline. Gly117 lines the ATP pocket. L-aspartate-binding residues include Thr119, Asn123, and Asp124. Asn123 serves as a coordination point for L-citrulline. Arg127, Ser175, Glu259, and Tyr271 together coordinate L-citrulline.

It belongs to the argininosuccinate synthase family. Type 1 subfamily. As to quaternary structure, homotetramer.

Its subcellular location is the cytoplasm. The catalysed reaction is L-citrulline + L-aspartate + ATP = 2-(N(omega)-L-arginino)succinate + AMP + diphosphate + H(+). It functions in the pathway amino-acid biosynthesis; L-arginine biosynthesis; L-arginine from L-ornithine and carbamoyl phosphate: step 2/3. This Paenarthrobacter aurescens (strain TC1) protein is Argininosuccinate synthase.